The primary structure comprises 295 residues: MRNRIEQALQQMPASFAPYLRELVLAKDFDATFSAEQYQQLLTLSGMEDSDLRVALLPIAAAYSYAPISEFYVGAIVRGISGRLYLGANMEFTGAQLGQTVHAEQCAISHAWMKGEKGVADITINFSPCGHCRQFMNELTTASSLKIQLPKRAAKTLQEYLPESFGPADLGIDSGLMSPVNHGKTSDDDEELIQQALRAMNISHSPYTQNFSGVALKMRSGAIYLGAYAENAAFNPSLPPLQVALAQAMMMGESFEDIEAAALVESATGKISHLADTQATLEVINPDIPLSYLSL.

CMP/dCMP-type deaminase domains lie at 48–168 (EDSD…FGPA) and 187–295 (DDDE…YLSL). 89–91 (NME) is a binding site for substrate. His-102 is a binding site for Zn(2+). Glu-104 functions as the Proton donor in the catalytic mechanism. Zn(2+) is bound by residues Cys-129 and Cys-132.

This sequence belongs to the cytidine and deoxycytidylate deaminase family. Homodimer. Zn(2+) is required as a cofactor.

It catalyses the reaction cytidine + H2O + H(+) = uridine + NH4(+). The catalysed reaction is 2'-deoxycytidine + H2O + H(+) = 2'-deoxyuridine + NH4(+). This enzyme scavenges exogenous and endogenous cytidine and 2'-deoxycytidine for UMP synthesis. This Vibrio cholerae serotype O1 (strain ATCC 39541 / Classical Ogawa 395 / O395) protein is Cytidine deaminase.